Reading from the N-terminus, the 489-residue chain is Dipeptide and tripeptide permease B (489 aa).

Over 1–27 (MNTTAPTGLLQQPRPFFMIFFVELWER) the chain is Cytoplasmic. A helical transmembrane segment spans residues 28 to 48 (FGYYGVQGILAVFFVKQLGFS). The Periplasmic portion of the chain corresponds to 49 to 52 (QEQA). A helical membrane pass occupies residues 53–73 (FITFGAFAALVYGLISIGGYV). The Cytoplasmic segment spans residues 74–82 (GDHLLGTKR). The helical transmembrane segment at 83–103 (TLVLGAIVLAIGYFMTGMSLL) threads the bilayer. At 104–106 (NPD) the chain is on the periplasmic side. Residues 107-127 (LIFIALGTIAVGNGLFKANPA) form a helical membrane-spanning segment. The Cytoplasmic portion of the chain corresponds to 128–146 (SLLSKCYQPKDPRLDGAFT). A helical membrane pass occupies residues 147–167 (LFYMSINIGSLLSLSLAPVIA). The Periplasmic segment spans residues 168–172 (DKFGY). The chain crosses the membrane as a helical span at residues 173-193 (AVTYNLCGAGLIVALLVYFAC). Residues 194–214 (RGMVKNIGSEPDHKPLRFRNL) lie on the Cytoplasmic side of the membrane. Residues 215 to 235 (LLVLLGTVVMIFLCAWLMHNV) traverse the membrane as a helical segment. A topological domain (periplasmic) is located at residue K236. A helical membrane pass occupies residues 237 to 257 (IANLVLIVLSIVVTIFFFREA). The Cytoplasmic portion of the chain corresponds to 258 to 267 (FRLDKTGRNK). A helical membrane pass occupies residues 268–288 (MFVAFILMIEAVLFYILYAQM). Residues 289–315 (PTSLNFFAINNVHHEILGFAINPVSFQ) are Periplasmic-facing. Residues 316–338 (ALNPFWVVVASPVLAAIYTRLGS) form a helical membrane-spanning segment. Residues 339-348 (KGKDLTMPMK) are Cytoplasmic-facing. A helical transmembrane segment spans residues 349–369 (FTLGMFLCALGFLTAAAGMWF). Residues 370-379 (ADAQGLTSPW) lie on the Periplasmic side of the membrane. The helical transmembrane segment at 380–400 (FIVLVYLFQSLGELLISALGL) threads the bilayer. Residues 401–410 (AMVAALVPQH) are Cytoplasmic-facing. A helical transmembrane segment spans residues 411 to 431 (LMGFILGMWFLTQAAAFLLGG). Residues 432 to 454 (YVATFTAVPENITDPLQTLPIYT) lie on the Periplasmic side of the membrane. Residues 455 to 475 (GVFSKIGLVTLAVTVVMAIMV) form a helical membrane-spanning segment. The Cytoplasmic segment spans residues 476–489 (PWLNRMINTPGTEQ).

Belongs to the major facilitator superfamily. Proton-dependent oligopeptide transporter (POT/PTR) (TC 2.A.17) family. DtpB subfamily.

It is found in the cell inner membrane. Proton-dependent permease that transports di- and tripeptides. The polypeptide is Dipeptide and tripeptide permease B (Salmonella typhimurium (strain LT2 / SGSC1412 / ATCC 700720)).